The chain runs to 519 residues: AAA-ATPase At4g30250 (519 aa).

An N-terminal signal peptide occupies residues 1–24 (MSDYWTTMASLLGMLAFCQTIVQL). 252-259 (GPPGTGKS) contributes to the ATP binding site. 2 disordered regions span residues 315 to 335 (GKNK…NGSG) and 467 to 519 (KSVG…EKEK). The span at 479-488 (QEEEEEAEEE) shows a compositional bias: acidic residues. A compositionally biased stretch (basic and acidic residues) spans 489 to 508 (QEKRALDSPNRRNREVCGFR). Residues 509–519 (EEEEEEDEKEK) show a composition bias toward acidic residues.

This sequence belongs to the AAA ATPase family. BCS1 subfamily. Mg(2+) is required as a cofactor.

The catalysed reaction is ATP + H2O = ADP + phosphate + H(+). This is AAA-ATPase At4g30250 from Arabidopsis thaliana (Mouse-ear cress).